Here is a 208-residue protein sequence, read N- to C-terminus: Dephospho-CoA kinase (208 aa).

A DPCK domain is found at 11-207 (VIGLTGGIAS…EYYLELAQHD (197 aa)). 19–24 (ASGKSA) lines the ATP pocket.

Belongs to the CoaE family.

The protein resides in the cytoplasm. It carries out the reaction 3'-dephospho-CoA + ATP = ADP + CoA + H(+). Its pathway is cofactor biosynthesis; coenzyme A biosynthesis; CoA from (R)-pantothenate: step 5/5. Its function is as follows. Catalyzes the phosphorylation of the 3'-hydroxyl group of dephosphocoenzyme A to form coenzyme A. The polypeptide is Dephospho-CoA kinase (Hahella chejuensis (strain KCTC 2396)).